A 461-amino-acid chain; its full sequence is Nuclear distribution protein PAC1 (461 aa).

A LisH domain is found at 9–41 (QAEELHKAIIAYLSANNLSSSATALRTELGLAE). The stretch at 61–88 (TSVVRLQKKIMDLESRNNALQSELDNAT) forms a coiled coil. WD repeat units follow at residues 114–155 (SHQN…RTIK), 157–197 (HTRP…KNIR), 201–248 (GHDH…CLKT), 251–290 (GHTAWIRDVYPSLDGRYLLSTGDDSTVRLWDLSVTNPENR), 295–355 (GHDH…LKTL), 357–396 (GHDNWVRALVFHPGGRYLLSVSDDKTLRCWDLEQDGKCVK), 401–444 (VHER…VRIR), and 446–461 (VIATGSVDMKLRIFAN).

Belongs to the WD repeat LIS1/nudF family. As to quaternary structure, self-associates. Interacts with NDL1 and dynein.

Its subcellular location is the cytoplasm. The protein localises to the cytoskeleton. The protein resides in the spindle pole. Its function is as follows. Positively regulates the activity of the minus-end directed microtubule motor protein dynein. May enhance dynein-mediated microtubule sliding by targeting dynein to the microtubule plus end. Required for nuclear migration during vegetative growth as well as development. Required for retrograde early endosome (EE) transport from the hyphal tip. Required for localization of dynein to the mitotic spindle poles. Recruits additional proteins to the dynein complex at SPBs. The protein is Nuclear distribution protein PAC1 of Pyricularia oryzae (strain 70-15 / ATCC MYA-4617 / FGSC 8958) (Rice blast fungus).